The sequence spans 214 residues: Glutathione S-transferase F11 (214 aa).

The GST N-terminal domain occupies 2 to 82 (VVKVYGQIKA…YYATKYADQG (81 aa)). Glutathione contacts are provided by residues 11-12 (AA), 40-41 (QK), 53-54 (QV), and 66-67 (ES). Positions 89 to 214 (TLEGRAIVDQ…WKKLMELAAY (126 aa)) constitute a GST C-terminal domain.

It belongs to the GST superfamily. Phi family.

The protein localises to the cytoplasm. The protein resides in the cytosol. The enzyme catalyses RX + glutathione = an S-substituted glutathione + a halide anion + H(+). Its function is as follows. May be involved in the conjugation of reduced glutathione to a wide number of exogenous and endogenous hydrophobic electrophiles and have a detoxification role against certain herbicides. This Arabidopsis thaliana (Mouse-ear cress) protein is Glutathione S-transferase F11.